The following is a 141-amino-acid chain: Large ribosomal subunit protein uL11 (141 aa).

The protein belongs to the universal ribosomal protein uL11 family. As to quaternary structure, part of the ribosomal stalk of the 50S ribosomal subunit. Interacts with L10 and the large rRNA to form the base of the stalk. L10 forms an elongated spine to which L12 dimers bind in a sequential fashion forming a multimeric L10(L12)X complex. In terms of processing, one or more lysine residues are methylated.

Forms part of the ribosomal stalk which helps the ribosome interact with GTP-bound translation factors. In Acetivibrio thermocellus (strain ATCC 27405 / DSM 1237 / JCM 9322 / NBRC 103400 / NCIMB 10682 / NRRL B-4536 / VPI 7372) (Clostridium thermocellum), this protein is Large ribosomal subunit protein uL11.